Here is a 183-residue protein sequence, read N- to C-terminus: Acidic proline-rich protein HP43A (183 aa).

The first 14 residues, 1-14, serve as a signal peptide directing secretion; the sequence is MLVVLLTAALLAEH. The disordered stretch occupies residues 22 to 183; sequence ISQLSEEEQQ…QGSEEQSTSL (162 aa). Residues 52-65 show a composition bias toward acidic residues; the sequence is SDEEGDDDGEEDGN. Repeat copies occupy residues 81–100, 101–120, 121–140, 141–160, and 161–180. A compositionally biased stretch (low complexity) spans 86–183; that stretch reads GNQQGPPQQE…QGSEEQSTSL (98 aa).

It is found in the secreted. The protein is Acidic proline-rich protein HP43A (H29) of Mesocricetus auratus (Golden hamster).